The primary structure comprises 88 residues: Small ribosomal subunit protein uS17 (88 aa).

Belongs to the universal ribosomal protein uS17 family. As to quaternary structure, part of the 30S ribosomal subunit.

Functionally, one of the primary rRNA binding proteins, it binds specifically to the 5'-end of 16S ribosomal RNA. The protein is Small ribosomal subunit protein uS17 of Prochlorococcus marinus (strain MIT 9515).